A 254-amino-acid polypeptide reads, in one-letter code: MVSWIISRLVVLIFGTLYPAYSSYKAVKTKNVKEYVKWMMYWIVFAFFTTAETLTDIILSWFPFYFELKIAFVIWLLSPYTKGSSVLYRKFVHPTLSNKEKEIDEYITQARDKSYETMMRVGKRGLNLAANAAVTAAAKGQGVLSEKLRSFSMQDLTLIRDEDALPLQGPDGRLQPGPVGLLDTIEDLGDEPALSLRSSTSQPDPRTETSEDDLGDKAPKRTKPIKKVPRAEPPASKTLKTRPKKKSSGGGDSA.

A run of 2 helical transmembrane segments spans residues 1–21 (MVSW…YPAY) and 35–55 (YVKW…ETLT). A Phosphoserine modification is found at Ser152. The tract at residues 194–254 (LSLRSSTSQP…KKSSGGGDSA (61 aa)) is disordered. Residues 205–219 (PRTETSEDDLGDKAP) are compositionally biased toward basic and acidic residues.

This sequence belongs to the DP1 family. In terms of assembly, interacts with odorant receptor proteins.

It localises to the membrane. Functionally, required for endoplasmic reticulum (ER) network formation, shaping and remodeling. May enhance the cell surface expression of odorant receptors. This Mus musculus (Mouse) protein is Receptor expression-enhancing protein 2 (Reep2).